The sequence spans 336 residues: Small ribosomal subunit protein RACK1y (336 aa).

WD repeat units follow at residues 15–55 (GHND…TAVA), 74–113 (GHSH…TTRR), 116–155 (GHTK…KYTI), 164–205 (GHTG…LRTK), 208–247 (GHNG…MLYK), 249–287 (DAGA…VMQD), and 297–336 (SQML…GYAI).

This sequence belongs to the WD repeat G protein beta family. Ribosomal protein RACK1 subfamily. In terms of assembly, homodimer and heterodimer with RACK1A.

Its function is as follows. Component of the RACK1 regulatory proteins that play a role in multiple signal transduction pathways. This chain is Small ribosomal subunit protein RACK1y (RACK1B), found in Oryza sativa subsp. japonica (Rice).